We begin with the raw amino-acid sequence, 126 residues long: Fatty acid-binding protein, liver (126 aa).

A2 bears the N-acetylalanine mark.

The protein belongs to the calycin superfamily. Fatty-acid binding protein (FABP) family. In terms of tissue distribution, liver.

It localises to the cytoplasm. Its function is as follows. Binds free fatty acids and their coenzyme A derivatives, bilirubin, and some other small molecules in the cytoplasm. May be involved in intracellular lipid transport this L-FABP binds only one fatty acid/molecule. Has more affinity for trans-parinaric acid than for cis-parinaric acid. This is Fatty acid-binding protein, liver (fabp1) from Rhamdia sapo (South American catfish).